A 188-amino-acid polypeptide reads, in one-letter code: Protein-L-isoaspartate O-methyltransferase (188 aa).

The active site involves Ser-33.

Belongs to the methyltransferase superfamily. L-isoaspartyl/D-aspartyl protein methyltransferase family.

Its subcellular location is the cytoplasm. It carries out the reaction [protein]-L-isoaspartate + S-adenosyl-L-methionine = [protein]-L-isoaspartate alpha-methyl ester + S-adenosyl-L-homocysteine. Functionally, catalyzes the methyl esterification of L-isoaspartyl residues in peptides and proteins that result from spontaneous decomposition of normal L-aspartyl and L-asparaginyl residues. It plays a role in the repair and/or degradation of damaged proteins. This is Protein-L-isoaspartate O-methyltransferase from Methanocella arvoryzae (strain DSM 22066 / NBRC 105507 / MRE50).